Reading from the N-terminus, the 273-residue chain is Glutamate 5-kinase (273 aa).

An ATP-binding site is contributed by Lys15. Residues Ser55, Asp142, and Asn158 each coordinate substrate. ATP-binding positions include 178-179 and 220-226; these read SD and TGGMLSK.

This sequence belongs to the glutamate 5-kinase family.

Its subcellular location is the cytoplasm. The catalysed reaction is L-glutamate + ATP = L-glutamyl 5-phosphate + ADP. It participates in amino-acid biosynthesis; L-proline biosynthesis; L-glutamate 5-semialdehyde from L-glutamate: step 1/2. Catalyzes the transfer of a phosphate group to glutamate to form L-glutamate 5-phosphate. The protein is Glutamate 5-kinase of Streptococcus pyogenes serotype M49 (strain NZ131).